An 827-amino-acid chain; its full sequence is Centrosomal protein of 95 kDa (827 aa).

Disordered regions lie at residues 115–145 (ISESSPNKSETEQYSKDSHGEEAGEDLERTE), 183–249 (GDTA…MVPS), 308–372 (FLTS…MSEK), 388–476 (LGDR…DSCH), and 489–558 (ELRK…KASP). Residues 123-145 (SETEQYSKDSHGEEAGEDLERTE) show a composition bias toward basic and acidic residues. A compositionally biased stretch (polar residues) spans 187–199 (HTFSQRSNGAQNS). Basic and acidic residues-rich tracts occupy residues 327 to 343 (EATRTRKPSKGERDENR) and 360 to 372 (PLTEQELHAMSEK). Phosphoserine occurs at positions 447, 449, and 451. Coiled coils occupy residues 584 to 633 (LTKM…VKKE) and 701 to 795 (LQIQ…DDDA).

The protein resides in the cytoplasm. Its subcellular location is the cytoskeleton. It localises to the microtubule organizing center. It is found in the centrosome. The protein localises to the spindle pole. The protein is Centrosomal protein of 95 kDa (Cep95) of Mus musculus (Mouse).